A 148-amino-acid polypeptide reads, in one-letter code: MNATWVDQRGAWIIHVVVITLLKLFFNLFPGVTAEWSWTLTNMTYVVGSYVMFHLIKGTPFDFNGGAYDNLTMWEQIDDETLFTPSRKFLIIVPIALFLVSTHYAHYDLKMFSWNCFLTTFVAVVPKLPVTHRLRISIPGITGRAQIS.

4 consecutive transmembrane segments (helical) span residues 12 to 32, 36 to 56, 89 to 109, and 111 to 131; these read WIIH…FPGV, WSWT…FHLI, FLII…HYDL, and MFSW…LPVT.

It to yeast YLR350W C-terminus.

It is found in the membrane. The chain is Protein ORM1 (ORM1) from Saccharomyces pastorianus (strain ATCC 76670 / Carlsberg bottom yeast no.2 / CBS 1503 / CLIB 180 / NBRC 10610 / NRRL Y-1525) (Saaz-type lager yeast).